We begin with the raw amino-acid sequence, 308 residues long: Pseudouridine-5'-phosphate glycosidase (308 aa).

The Proton donor role is filled by E25. The substrate site is built by K86 and V106. Residue D142 participates in Mn(2+) binding. 144-146 contacts substrate; sequence SAD. The active-site Nucleophile is K163.

The protein belongs to the pseudouridine-5'-phosphate glycosidase family. Homotrimer. The cofactor is Mn(2+).

The enzyme catalyses D-ribose 5-phosphate + uracil = psi-UMP + H2O. Catalyzes the reversible cleavage of pseudouridine 5'-phosphate (PsiMP) to ribose 5-phosphate and uracil. Functions biologically in the cleavage direction, as part of a pseudouridine degradation pathway. This is Pseudouridine-5'-phosphate glycosidase from Symbiobacterium thermophilum (strain DSM 24528 / JCM 14929 / IAM 14863 / T).